The following is a 477-amino-acid chain: Bifunctional protein HldE (477 aa).

The tract at residues 1–318 is ribokinase; sequence MKVNLPAFER…ENAVRGRADT (318 aa). Residue 195–198 participates in ATP binding; it reads NLSE. D264 is a catalytic residue. The cytidylyltransferase stretch occupies residues 344-477; it reads MTNGVFDILH…IKKIQTESEK (134 aa).

The protein in the N-terminal section; belongs to the carbohydrate kinase PfkB family. In the C-terminal section; belongs to the cytidylyltransferase family. In terms of assembly, homodimer.

The enzyme catalyses D-glycero-beta-D-manno-heptose 7-phosphate + ATP = D-glycero-beta-D-manno-heptose 1,7-bisphosphate + ADP + H(+). It catalyses the reaction D-glycero-beta-D-manno-heptose 1-phosphate + ATP + H(+) = ADP-D-glycero-beta-D-manno-heptose + diphosphate. The protein operates within nucleotide-sugar biosynthesis; ADP-L-glycero-beta-D-manno-heptose biosynthesis; ADP-L-glycero-beta-D-manno-heptose from D-glycero-beta-D-manno-heptose 7-phosphate: step 1/4. It participates in nucleotide-sugar biosynthesis; ADP-L-glycero-beta-D-manno-heptose biosynthesis; ADP-L-glycero-beta-D-manno-heptose from D-glycero-beta-D-manno-heptose 7-phosphate: step 3/4. Its function is as follows. Catalyzes the phosphorylation of D-glycero-D-manno-heptose 7-phosphate at the C-1 position to selectively form D-glycero-beta-D-manno-heptose-1,7-bisphosphate. Catalyzes the ADP transfer from ATP to D-glycero-beta-D-manno-heptose 1-phosphate, yielding ADP-D-glycero-beta-D-manno-heptose. The protein is Bifunctional protein HldE of Salmonella paratyphi A (strain ATCC 9150 / SARB42).